A 453-amino-acid polypeptide reads, in one-letter code: DNA repair protein RadA (453 aa).

Residues 10 to 27 (CQECGYQSPKYLGRCPNC) form a C4-type zinc finger. Residue 95-102 (GDPGIGKS) coordinates ATP. A RadA KNRFG motif motif is present at residues 251–255 (KNRFG). The interval 350–453 (DAYLKSAGGV…VGQVLNAVFS (104 aa)) is lon-protease-like.

Belongs to the RecA family. RadA subfamily.

Its function is as follows. DNA-dependent ATPase involved in processing of recombination intermediates, plays a role in repairing DNA breaks. Stimulates the branch migration of RecA-mediated strand transfer reactions, allowing the 3' invading strand to extend heteroduplex DNA faster. Binds ssDNA in the presence of ADP but not other nucleotides, has ATPase activity that is stimulated by ssDNA and various branched DNA structures, but inhibited by SSB. Does not have RecA's homology-searching function. The protein is DNA repair protein RadA of Streptococcus pyogenes serotype M1.